Consider the following 1013-residue polypeptide: Prominin-like protein (1013 aa).

A helical membrane pass occupies residues 32 to 52 (IAYLAICGLSVAIFGFALATL). N-linked (GlcNAc...) asparagine glycosylation is found at asparagine 99 and asparagine 116. The next 3 helical transmembrane spans lie at 215–235 (CGICLLILIIGLIFGIIIAFV), 489–509 (VVSLIVCLLILLVLFILIFAL), and 535–555 (LLLAILLIFCVFSFIALVGLF). Residues asparagine 576, asparagine 618, asparagine 803, and asparagine 824 are each glycosylated (N-linked (GlcNAc...) asparagine). The helical transmembrane segment at 852–872 (INGFWVGILLCALLFLPILFV) threads the bilayer. The segment at 918 to 1013 (ANVPKKRRKA…YYYPGASEQD (96 aa)) is disordered. The N-linked (GlcNAc...) asparagine glycan is linked to asparagine 949. Gly residues predominate over residues 950 to 963 (RSGGDRGGGGGDGA).

The protein belongs to the prominin family.

It is found in the membrane. In Drosophila melanogaster (Fruit fly), this protein is Prominin-like protein.